The chain runs to 171 residues: Endoribonuclease YbeY (171 aa).

Zn(2+) contacts are provided by His115, His119, and His125.

The protein belongs to the endoribonuclease YbeY family. Zn(2+) is required as a cofactor.

It is found in the cytoplasm. In terms of biological role, single strand-specific metallo-endoribonuclease involved in late-stage 70S ribosome quality control and in maturation of the 3' terminus of the 16S rRNA. The protein is Endoribonuclease YbeY of Tropheryma whipplei (strain TW08/27) (Whipple's bacillus).